The primary structure comprises 429 residues: Adenylosuccinate synthetase (429 aa).

GTP is bound by residues 12–18 and 40–42; these read GDEGKGK and GHT. Asp-13 serves as the catalytic Proton acceptor. Mg(2+) contacts are provided by Asp-13 and Gly-40. Residues 13–16, 38–41, Thr-128, Arg-142, Gln-223, Thr-238, and Arg-302 each bind IMP; these read DEGK and NAGH. His-41 (proton donor) is an active-site residue. 298 to 304 is a substrate binding site; that stretch reads TVTGRPR. Residues Arg-304, 330-332, and 412-414 contribute to the GTP site; these read LLD and SVG.

Belongs to the adenylosuccinate synthetase family. As to quaternary structure, homodimer. It depends on Mg(2+) as a cofactor.

It localises to the cytoplasm. It catalyses the reaction IMP + L-aspartate + GTP = N(6)-(1,2-dicarboxyethyl)-AMP + GDP + phosphate + 2 H(+). It participates in purine metabolism; AMP biosynthesis via de novo pathway; AMP from IMP: step 1/2. In terms of biological role, plays an important role in the de novo pathway of purine nucleotide biosynthesis. Catalyzes the first committed step in the biosynthesis of AMP from IMP. The sequence is that of Adenylosuccinate synthetase from Lactobacillus helveticus (strain DPC 4571).